The sequence spans 267 residues: Phosphate import ATP-binding protein PstB (267 aa).

Residues 12–251 form the ABC transporter domain; sequence VSLDNVSIRY…EFDKTKNMFN (240 aa). An ATP-binding site is contributed by 44-51; it reads GPSGCGKS.

The protein belongs to the ABC transporter superfamily. Phosphate importer (TC 3.A.1.7) family. In terms of assembly, the complex is composed of two ATP-binding proteins (PstB), two transmembrane proteins (PstC and PstA) and a solute-binding protein (PstS).

The protein resides in the cell inner membrane. It carries out the reaction phosphate(out) + ATP + H2O = ADP + 2 phosphate(in) + H(+). Its function is as follows. Part of the ABC transporter complex PstSACB involved in phosphate import. Responsible for energy coupling to the transport system. The chain is Phosphate import ATP-binding protein PstB from Prochlorococcus marinus (strain NATL2A).